We begin with the raw amino-acid sequence, 83 residues long: Cytochrome b559 subunit alpha (83 aa).

Residues 21–35 (VIHSITVPSLFIAGW) form a helical membrane-spanning segment. Heme is bound at residue His23.

The protein belongs to the PsbE/PsbF family. Heterodimer of an alpha subunit and a beta subunit. PSII is composed of 1 copy each of membrane proteins PsbA, PsbB, PsbC, PsbD, PsbE, PsbF, PsbH, PsbI, PsbJ, PsbK, PsbL, PsbM, PsbT, PsbX, PsbY, PsbZ, Psb30/Ycf12, at least 3 peripheral proteins of the oxygen-evolving complex and a large number of cofactors. It forms dimeric complexes. Heme b is required as a cofactor.

It is found in the plastid. The protein localises to the chloroplast thylakoid membrane. Its function is as follows. This b-type cytochrome is tightly associated with the reaction center of photosystem II (PSII). PSII is a light-driven water:plastoquinone oxidoreductase that uses light energy to abstract electrons from H(2)O, generating O(2) and a proton gradient subsequently used for ATP formation. It consists of a core antenna complex that captures photons, and an electron transfer chain that converts photonic excitation into a charge separation. The sequence is that of Cytochrome b559 subunit alpha from Oltmannsiellopsis viridis (Marine flagellate).